We begin with the raw amino-acid sequence, 632 residues long: Phospholipid:diacylglycerol acyltransferase (632 aa).

The span at 1–15 (MASSKKSKTHKKKKE) shows a compositional bias: basic residues. Residues 1-47 (MASSKKSKTHKKKKEVKSPIDLPNSKKPTRALSEQPSASETQSVSNK) form a disordered region. Over 1-56 (MASSKKSKTHKKKKEVKSPIDLPNSKKPTRALSEQPSASETQSVSNKSRKSKFGKR) the chain is Cytoplasmic. Over residues 32-46 (LSEQPSASETQSVSN) the composition is skewed to polar residues. A helical transmembrane segment spans residues 57–77 (LNFILGAILGICGAFFFAVGD). At 78-632 (DNAVFDPATL…NEINLDKPRN (555 aa)) the chain is on the lumenal side. Asp136 lines the substrate pocket. The active-site Acyl-ester intermediate is the Ser293. A substrate-binding site is contributed by Met294. Catalysis depends on charge relay system residues Asp535 and His586.

The protein belongs to the AB hydrolase superfamily. Lipase family.

It is found in the endoplasmic reticulum membrane. It catalyses the reaction a glycerophospholipid + a 1,2-diacyl-sn-glycerol = a monoacylglycerophospholipid + a triacyl-sn-glycerol. The protein operates within glycerolipid metabolism; triacylglycerol biosynthesis. Catalyzes triacylglycerol (TAG) formation by an acyl-CoA independent pathway. The enzyme specifically transfers acyl groups from the sn-2 position of a phospholipid to diacylglycerol (DAG), thus forming an sn-1-lysophospholipid. Plays a major role in triacylglycerol formation at log phase. Involved in lipid particle synthesis from the endoplasmic reticulum, promoting localized TAG production at discrete ER subdomains. This chain is Phospholipid:diacylglycerol acyltransferase (plh1), found in Schizosaccharomyces pombe (strain 972 / ATCC 24843) (Fission yeast).